The following is a 79-amino-acid chain: MTKHELRMGKFSFSVGDYIEVLAQGRKYRLQIQEIDDYNNIIGTDPNGNPIYIKISKISVIRKMTQQEFTGGENVDTTK.

This is an uncharacterized protein from Sulfolobus islandicus filamentous virus (isolate Iceland/Hveragerdi) (SIFV).